We begin with the raw amino-acid sequence, 166 residues long: Small ribosomal subunit protein uS3m (166 aa).

The N-terminal 25 residues, 1–25, are a transit peptide targeting the mitochondrion; it reads MLRSLQHVESHINQCRRISTTSTLL.

The protein belongs to the universal ribosomal protein uS3 family. In terms of assembly, component of the mitochondrial ribosome small subunit (28S) which comprises a 12S rRNA and about 30 distinct proteins.

It is found in the mitochondrion. The chain is Small ribosomal subunit protein uS3m (mrps-24) from Caenorhabditis briggsae.